The following is a 156-amino-acid chain: Perlucin-like protein (156 aa).

An N-terminal signal peptide occupies residues 1–22 (MGKLTVVGILTLFIFYIVAASG). 3 disulfide bridges follow: C30-C41, C58-C156, and C131-C147. A C-type lectin domain is found at 37–156 (YKTNCYFFSP…CNTDQMGYIC (120 aa)).

Component of the organic matrix of calcified shell layers like nacre and prisms.

It localises to the secreted. This is Perlucin-like protein from Mytilus galloprovincialis (Mediterranean mussel).